A 504-amino-acid chain; its full sequence is Glutamate--tRNA ligase (504 aa).

Residues 10 to 20 (PSPTGDPHVGT) carry the 'HIGH' region motif. Positions 251–255 (KLSKR) match the 'KMSKS' region motif. Residue lysine 254 participates in ATP binding.

Belongs to the class-I aminoacyl-tRNA synthetase family. Glutamate--tRNA ligase type 1 subfamily. As to quaternary structure, monomer.

It localises to the cytoplasm. The catalysed reaction is tRNA(Glu) + L-glutamate + ATP = L-glutamyl-tRNA(Glu) + AMP + diphosphate. Catalyzes the attachment of glutamate to tRNA(Glu) in a two-step reaction: glutamate is first activated by ATP to form Glu-AMP and then transferred to the acceptor end of tRNA(Glu). This Cellvibrio japonicus (strain Ueda107) (Pseudomonas fluorescens subsp. cellulosa) protein is Glutamate--tRNA ligase.